The chain runs to 131 residues: Hydrophilin PGA14 (131 aa).

The signal sequence occupies residues 1-18; sequence MKFTTVATVFAISSLAAA. Composition is skewed to basic and acidic residues over residues 42–59 and 79–96; these read YGRF…ETGT and KESD…RDSK. A disordered region spans residues 42–110; that stretch reads YGRFDKTSRS…NSTTSSGNNG (69 aa). N-linked (GlcNAc...) asparagine glycosylation is found at Asn-97 and Asn-101. The segment covering 97–110 has biased composition (low complexity); the sequence is NASSNSTTSSGNNG. A lipid anchor (GPI-anchor amidated serine) is attached at Ser-105. The propeptide at 106-131 is removed in mature form; that stretch reads SGNNGVATGVSLGLAGVLAVGAALVI.

The protein belongs to the PGA14 family. Post-translationally, the GPI-anchor is attached to the protein in the endoplasmic reticulum and serves to target the protein to the cell surface. There, the glucosamine-inositol phospholipid moiety is cleaved off and the GPI-modified mannoprotein is covalently attached via its lipidless GPI glycan remnant to the 1,6-beta-glucan of the outer cell wall layer.

The protein localises to the secreted. Its subcellular location is the cell wall. It localises to the membrane. Hydrophilin which is essential to overcome the simple stress of the desiccation-rehydration process. This Candida albicans (strain SC5314 / ATCC MYA-2876) (Yeast) protein is Hydrophilin PGA14 (PGA14).